The following is a 244-amino-acid chain: Sperm-egg fusion protein Juno (244 aa).

Residues 1–19 (MAQWWLILLGLWTVLPSLA) form the signal peptide. 8 disulfide bridges follow: Cys-27–Cys-55, Cys-47–Cys-95, Cys-56–Cys-99, Cys-79–Cys-166, Cys-86–Cys-137, Cys-126–Cys-200, Cys-130–Cys-180, and Cys-143–Cys-160. The important for interaction with IZUMO1 stretch occupies residues 62–81 (WEAHLDEPLLFNFSMTHCGL). Asn-73 carries an N-linked (GlcNAc...) asparagine glycan. A propeptide spanning residues 223–244 (SASAPQLSYSITAFSLCLLLHA) is cleaved from the precursor.

The protein belongs to the folate receptor family. In terms of assembly, monomer. Interacts with IZUMO1; the interaction is direct. IZUMO1 and IZUMO1R/JUNO form a complex with 1:1 stoichiometry. Interacts with FCRL3/MAIA; FCRL3/MAIA replaces IZUMO1R/JUNO as IZUMO1 receptor after sperm-egg adhesion, thereby permitting species-specific gamete fusion. Interacts with WDR54. The protein is rapidly cleaved following fertilization, being only weakly detectable in zona-intact fertilized eggs at telophase II and undetectable at the pronuclear stage. Sheding is probably required to block to polyspermy and ensuring egg fusion with a single sperm. As to expression, expressed in the oocyte (at protein level).

It is found in the cell membrane. The protein localises to the cell projection. Its subcellular location is the microvillus membrane. Receptor for IZUMO1 present at the cell surface of oocytes (oolemma), which is essential for species-specific gamete recognition and fertilization. The IZUMO1:IZUMO1R/JUNO interaction is a necessary adhesion event between sperm and egg that is required for fertilization but is not sufficient for cell fusion. The ligand-receptor interaction probably does not act as a membrane 'fusogen'. Does not bind folate. This is Sperm-egg fusion protein Juno (Izumo1r) from Rattus norvegicus (Rat).